A 309-amino-acid polypeptide reads, in one-letter code: Epidermal retinol dehydrogenase 2 (309 aa).

Residues 11–31 traverse the membrane as a helical segment; the sequence is LFIFLGKSLFSLLEAMIFALL. 44 to 68 contacts NADP(+); sequence LITGAGSGLGRLLALQFARLGSVLV. Residue serine 177 coordinates substrate. Residue tyrosine 190 is the Proton acceptor of the active site. The helical transmembrane segment at 270-290 threads the bilayer; sequence LLYFMMFLKSFLPLKTGLLIA.

It belongs to the short-chain dehydrogenases/reductases (SDR) family. In terms of tissue distribution, detected in adult lung. Detected at low levels in adult brain, heart, testis, placenta, cervix, pancreas, uterus, stomach, rectum, small intestine, colon, esophagus, thymus, skin, and skin keratinocyte. Expression is higher in psoriasis lesions relative to unaffected skin from psoriasis patients. Detected in fetal kidney, skin and lung.

Its subcellular location is the endoplasmic reticulum membrane. It carries out the reaction all-trans-retinol--[retinol-binding protein] + NAD(+) = all-trans-retinal--[retinol-binding protein] + NADH + H(+). It participates in cofactor metabolism; retinol metabolism. Functionally, oxidoreductase with strong preference for NAD. Active in both the oxidative and reductive directions. Oxidizes all-trans-retinol in all-trans-retinaldehyde. No activity was detected with 11-cis-retinol or 11-cis-retinaldehyde as substrates with either NAD(+)/NADH or NADP(+)/NADPH. The chain is Epidermal retinol dehydrogenase 2 from Homo sapiens (Human).